The primary structure comprises 446 residues: MAPLSQISSHINSTCGAENSTGVNRARPHAYYALSYCALILAIIFGNGLVCAAVLRERALQTTTNYLVVSLAVADLLVATLVMPWVVYLEVTGGVWNFSRICCDVFVTLDVMMCTASILNLCAISIDRYTAVVMPVHYQHGTGQSSCRRVALMITAVWVLAFAVSCPLLFGFNTTGDPSICSISNPDFVIYSSVVSFYVPFGVTVLVYARIYMVLRQRRRKRILTRQNSQCISIRPGFPQQSSCLRLHPIRQFSIRARFLSDATGQMEHIEDKPYPQKCQDPLLSHLQPLSPGQTHGELKRYYSICQDTALRHPNFEGGGGMSQVERTRNSLSPTMAPKLSLEVRKLSNGRLSTSLKLGPLQPRGVPLREKKATQMVVIVLGAFIVCWLPFFLTHVLNTHCQACHVSPELYRATTWLGYVNSALNPVIYTTFNIEFRKAFLKILSC.

Residues 1 to 32 (MAPLSQISSHINSTCGAENSTGVNRARPHAYY) are Extracellular-facing. Residues asparagine 12 and asparagine 19 are each glycosylated (N-linked (GlcNAc...) asparagine). Residues 33 to 55 (ALSYCALILAIIFGNGLVCAAVL) traverse the membrane as a helical segment. Residues 56–65 (RERALQTTTN) lie on the Cytoplasmic side of the membrane. The helical transmembrane segment at 66-88 (YLVVSLAVADLLVATLVMPWVVY) threads the bilayer. The Extracellular segment spans residues 89–104 (LEVTGGVWNFSRICCD). The N-linked (GlcNAc...) asparagine glycan is linked to asparagine 97. Cysteines 103 and 181 form a disulfide. The helical transmembrane segment at 105-126 (VFVTLDVMMCTASILNLCAISI) threads the bilayer. At 127–149 (DRYTAVVMPVHYQHGTGQSSCRR) the chain is on the cytoplasmic side. A helical transmembrane segment spans residues 150-170 (VALMITAVWVLAFAVSCPLLF). Residues 171–187 (GFNTTGDPSICSISNPD) lie on the Extracellular side of the membrane. N-linked (GlcNAc...) asparagine glycosylation occurs at asparagine 173. Residues 188–209 (FVIYSSVVSFYVPFGVTVLVYA) traverse the membrane as a helical segment. Over 210 to 375 (RIYMVLRQRR…VPLREKKATQ (166 aa)) the chain is Cytoplasmic. The helical transmembrane segment at 376-397 (MVVIVLGAFIVCWLPFFLTHVL) threads the bilayer. The Extracellular portion of the chain corresponds to 398 to 412 (NTHCQACHVSPELYR). Cysteine 401 and cysteine 404 are disulfide-bonded. A helical membrane pass occupies residues 413–432 (ATTWLGYVNSALNPVIYTTF). Topologically, residues 433–446 (NIEFRKAFLKILSC) are cytoplasmic.

The protein belongs to the G-protein coupled receptor 1 family. Interacts with CLIC6. Interacts with GRK4. Interacts with PALM. Interacts with FLNA (via filamin repeat 21); increases PKA-mediated phosphorylation of FLNA. Phosphorylated by GRK4. Post-translationally, palmitoylated.

It is found in the cell membrane. In terms of biological role, dopamine receptor whose activity is mediated by G proteins which inhibit adenylyl cyclase. Promotes cell proliferation. In Mus musculus (Mouse), this protein is D(3) dopamine receptor (Drd3).